Consider the following 745-residue polypeptide: Double-stranded RNA-specific editase B2 (745 aa).

Disordered regions lie at residues 1 to 35 (MASV…RKDK) and 50 to 104 (SPGT…PLEE). Residues 20 to 34 (CKSKRRRRRRSKRKD) are compositionally biased toward basic residues. The interval 23 to 35 (KRRRRRRSKRKDK) is R-domain (ssRNA-binding). 2 consecutive DRBM domains span residues 125–191 (TPKN…SFVQ) and 283–347 (NPVV…ALFD). Positions 414-741 (VLSSGTKCIS…VRKPPEQDQF (328 aa)) constitute an A to I editase domain. His438 provides a ligand contact to Zn(2+). The active-site Proton donor is Glu440. Zn(2+)-binding residues include Cys496 and Cys561.

Brain specific.

The protein resides in the nucleus. Lacks editing activity. It prevents the binding of other ADAR enzymes to targets in vitro, and decreases the efficiency of these enzymes. Capable of binding to dsRNA but also to ssRNA. This Mus musculus (Mouse) protein is Double-stranded RNA-specific editase B2 (Adarb2).